The following is a 357-amino-acid chain: GTPase Obg (357 aa).

In terms of domain architecture, Obg spans 1–159 (MKFVDEAFID…RNLKLELKVL (159 aa)). Residues 160-334 (ADVGLLGMPN…LIQAIYQHVR (175 aa)) form the OBG-type G domain. Residues 166–173 (GMPNAGKS), 191–195 (FTTLH), 213–216 (DIPG), 284–287 (NKLD), and 315–317 (SAL) each bind GTP. The Mg(2+) site is built by serine 173 and threonine 193.

It belongs to the TRAFAC class OBG-HflX-like GTPase superfamily. OBG GTPase family. Monomer. It depends on Mg(2+) as a cofactor.

The protein localises to the cytoplasm. Its function is as follows. An essential GTPase which binds GTP, GDP and possibly (p)ppGpp with moderate affinity, with high nucleotide exchange rates and a fairly low GTP hydrolysis rate. Plays a role in control of the cell cycle, stress response, ribosome biogenesis and in those bacteria that undergo differentiation, in morphogenesis control. The polypeptide is GTPase Obg (Paracidovorax citrulli (strain AAC00-1) (Acidovorax citrulli)).